The chain runs to 292 residues: MQTEIQSSSLRHHPYRRARLPRSDEETRASLTEQHPLLPDCDHADYHNVSSVRGLPCAAGFTLLQEFPVPWDMILTPEEIKILKRCMSVCLCPATLDLVRAQMVSGYERWILHCHCSSPGSLQCRAGGTLLAVWFRRVIYGCMFNQRFPWYRQIVNRNMPKEIMYMGSVFMRGRHLIYCRIWYDGHVGSIIPNMSFGWSALNYGLLNNMVIMCCTYCENMAEIRMRCCARRTRRLMLKAVGIIVRETCDPDPICSSRTEPRRQRLLRALMERHRPILFSEYESVRSSHSTRL.

It belongs to the adenoviridae E4 30 to 34 kDa protein family. Interacts with E1B-55k.

The protein localises to the host nucleus. Its subcellular location is the host cytoplasm. Its function is as follows. Plays a major role to prevent cellular inhibition of viral genome replication by nuclear bodies. Assembles an SCF-like E3 ubiquitin ligase complex based on the cellular proteins ELOB, ELOC, CUL5 and RBX1, in cooperation with viral E1B-55K. This viral RING-type ligase ubiquitinates cellular substrates prior to proteasomal degradation: p53/TP53, LIG4, MRE11-RAD50-NBS1 (MRN) complex, ITGA3, DAXX and BLM. This is Early E4 34 kDa protein from Human adenovirus D serotype 9 (HAdV-9).